A 232-amino-acid polypeptide reads, in one-letter code: Uracil-DNA glycosylase (232 aa).

Catalysis depends on Asp-71, which acts as the Proton acceptor.

It belongs to the uracil-DNA glycosylase (UDG) superfamily. UNG family.

The protein localises to the cytoplasm. It carries out the reaction Hydrolyzes single-stranded DNA or mismatched double-stranded DNA and polynucleotides, releasing free uracil.. Functionally, excises uracil residues from the DNA which can arise as a result of misincorporation of dUMP residues by DNA polymerase or due to deamination of cytosine. The polypeptide is Uracil-DNA glycosylase (Azotobacter vinelandii (strain DJ / ATCC BAA-1303)).